We begin with the raw amino-acid sequence, 352 residues long: Probable dual-specificity RNA methyltransferase RlmN (352 aa).

The active-site Proton acceptor is the glutamate 93. A Radical SAM core domain is found at 99–333 (FNYGYSVCVT…IRLERGSSID (235 aa)). Cysteine 106 and cysteine 336 are oxidised to a cystine. Residues cysteine 113, cysteine 117, and cysteine 120 each contribute to the [4Fe-4S] cluster site. Residues 164–165 (GE), serine 196, and asparagine 295 each bind S-adenosyl-L-methionine. Catalysis depends on cysteine 336, which acts as the S-methylcysteine intermediate.

The protein belongs to the radical SAM superfamily. RlmN family. It depends on [4Fe-4S] cluster as a cofactor.

The protein resides in the cytoplasm. It carries out the reaction adenosine(2503) in 23S rRNA + 2 reduced [2Fe-2S]-[ferredoxin] + 2 S-adenosyl-L-methionine = 2-methyladenosine(2503) in 23S rRNA + 5'-deoxyadenosine + L-methionine + 2 oxidized [2Fe-2S]-[ferredoxin] + S-adenosyl-L-homocysteine. The catalysed reaction is adenosine(37) in tRNA + 2 reduced [2Fe-2S]-[ferredoxin] + 2 S-adenosyl-L-methionine = 2-methyladenosine(37) in tRNA + 5'-deoxyadenosine + L-methionine + 2 oxidized [2Fe-2S]-[ferredoxin] + S-adenosyl-L-homocysteine. In terms of biological role, specifically methylates position 2 of adenine 2503 in 23S rRNA and position 2 of adenine 37 in tRNAs. This chain is Probable dual-specificity RNA methyltransferase RlmN, found in Malacoplasma penetrans (strain HF-2) (Mycoplasma penetrans).